The sequence spans 428 residues: 3-phosphoshikimate 1-carboxyvinyltransferase (428 aa).

3-phosphoshikimate contacts are provided by Lys21, Ser22, and Arg26. Lys21 is a binding site for phosphoenolpyruvate. Positions 92 and 120 each coordinate phosphoenolpyruvate. Positions 165, 167, 313, and 340 each coordinate 3-phosphoshikimate. Residue Gln167 coordinates phosphoenolpyruvate. The active-site Proton acceptor is Asp313. The phosphoenolpyruvate site is built by Arg344 and Arg386.

Belongs to the EPSP synthase family. In terms of assembly, monomer.

The protein resides in the cytoplasm. It carries out the reaction 3-phosphoshikimate + phosphoenolpyruvate = 5-O-(1-carboxyvinyl)-3-phosphoshikimate + phosphate. It participates in metabolic intermediate biosynthesis; chorismate biosynthesis; chorismate from D-erythrose 4-phosphate and phosphoenolpyruvate: step 6/7. Its function is as follows. Catalyzes the transfer of the enolpyruvyl moiety of phosphoenolpyruvate (PEP) to the 5-hydroxyl of shikimate-3-phosphate (S3P) to produce enolpyruvyl shikimate-3-phosphate and inorganic phosphate. The sequence is that of 3-phosphoshikimate 1-carboxyvinyltransferase from Carboxydothermus hydrogenoformans (strain ATCC BAA-161 / DSM 6008 / Z-2901).